Reading from the N-terminus, the 285-residue chain is Acetyl-coenzyme A carboxylase carboxyl transferase subunit beta (285 aa).

In terms of domain architecture, CoA carboxyltransferase N-terminal spans 29–285 (IMTKCPNCKK…ILKIHQEVSN (257 aa)). The Zn(2+) site is built by Cys-33, Cys-36, Cys-52, and Cys-55. Residues 33–55 (CPNCKKIMYTKELNENLNVCFNC) form a C4-type zinc finger.

Belongs to the AccD/PCCB family. Acetyl-CoA carboxylase is a heterohexamer composed of biotin carboxyl carrier protein (AccB), biotin carboxylase (AccC) and two subunits each of ACCase subunit alpha (AccA) and ACCase subunit beta (AccD). The cofactor is Zn(2+).

The protein localises to the cytoplasm. The enzyme catalyses N(6)-carboxybiotinyl-L-lysyl-[protein] + acetyl-CoA = N(6)-biotinyl-L-lysyl-[protein] + malonyl-CoA. Its pathway is lipid metabolism; malonyl-CoA biosynthesis; malonyl-CoA from acetyl-CoA: step 1/1. In terms of biological role, component of the acetyl coenzyme A carboxylase (ACC) complex. Biotin carboxylase (BC) catalyzes the carboxylation of biotin on its carrier protein (BCCP) and then the CO(2) group is transferred by the transcarboxylase to acetyl-CoA to form malonyl-CoA. This is Acetyl-coenzyme A carboxylase carboxyl transferase subunit beta from Staphylococcus epidermidis (strain ATCC 35984 / DSM 28319 / BCRC 17069 / CCUG 31568 / BM 3577 / RP62A).